The sequence spans 154 residues: Protein X (154 aa).

The tract at residues 68-117 (PCALRFTFARRMETTVNAHQVLPKVLHKRTLGLSAMSTTDLEAYFKDCVF) is mitochondrial targeting sequence.

This sequence belongs to the orthohepadnavirus protein X family. In terms of assembly, may form homodimer. May interact with host CEBPA, CFLAR, CREB1, DDB1, E4F1, HBXIP, HSPD1/HSP60, NFKBIA, POLR2E and SMAD4. Interacts with host SMC5-SMC6 complex and induces its degradation. Interacts with host TRPC4AP; leading to prevent ubiquitination of TRPC4AP. Interacts with host PLSCR1; this interaction promotes ubiquitination and degradation of HBx and impairs HBx-mediated cell proliferation. Post-translationally, a fraction may be phosphorylated in insect cells and HepG2 cells, a human hepatoblastoma cell line. Phosphorylated in vitro by host protein kinase C or mitogen-activated protein kinase. N-acetylated in insect cells.

It localises to the host cytoplasm. The protein resides in the host nucleus. Its subcellular location is the host mitochondrion. Functionally, multifunctional protein that plays a role in silencing host antiviral defenses and promoting viral transcription. Does not seem to be essential for HBV infection. May be directly involved in development of cirrhosis and liver cancer (hepatocellular carcinoma). Most of cytosolic activities involve modulation of cytosolic calcium. The effect on apoptosis is controversial depending on the cell types in which the studies have been conducted. May induce apoptosis by localizing in mitochondria and causing loss of mitochondrial membrane potential. May also modulate apoptosis by binding host CFLAR, a key regulator of the death-inducing signaling complex (DISC). Promotes viral transcription by using the host E3 ubiquitin ligase DDB1 to target the SMC5-SMC6 complex to proteasomal degradation. This host complex would otherwise bind to viral episomal DNA, and prevents its transcription. Moderately stimulates transcription of many different viral and cellular transcription elements. Promoters and enhancers stimulated by HBx contain DNA binding sites for NF-kappa-B, AP-1, AP-2, c-EBP, ATF/CREB, or the calcium-activated factor NF-AT. In Hepatitis B virus genotype C subtype ayw (isolate China/Tibet127/2002) (HBV-C), this protein is Protein X.